Consider the following 228-residue polypeptide: DNA-binding response regulator MtrA (228 aa).

A Response regulatory domain is found at 7–120 (RILVVDDDAS…ELVARVRARL (114 aa)). Asp56 carries the post-translational modification 4-aspartylphosphate. A DNA-binding region (ompR/PhoB-type) is located at residues 128-227 (AEMLSIADVE…VRGVGYKAGP (100 aa)).

Phosphorylated by MtrB.

Functionally, member of the two-component regulatory system MtrA/MtrB. This Mycobacterium bovis (strain ATCC BAA-935 / AF2122/97) protein is DNA-binding response regulator MtrA (mtrA).